Here is a 347-residue protein sequence, read N- to C-terminus: MANAYKQAGVDIEAGYEAVSRMKKHVQTTMRKEVLGGLGGFGGMFDLSKLPLEEPVLVSGTDGVGTKLMLAFMADKHDTIGIDAVAMCVNDIVVQGAEPLFFLDYIACGKADPSKIEHIVKGIAEGCRQAGCSLIGGETAEMPGMYSKEEYDLAGFTVGIVDKKKIITGHSLDEGHVLIGLASSGIHSNGYSLVRKVLLEDGQMSLDRIYGRLELPLGEELLKPTKIYVKPILELLKKYEVYGMAHITGGGFIENIPRMLPKGIGAEIDLGSWNIQPIFSLIQEVGKIEEKEMFNIFNMGIGMVVAVKEENAKAVVRLLEEQGEKAYIIGRTVKGSGVAFNGGIDHE.

The protein belongs to the AIR synthase family.

Its subcellular location is the cytoplasm. The catalysed reaction is 2-formamido-N(1)-(5-O-phospho-beta-D-ribosyl)acetamidine + ATP = 5-amino-1-(5-phospho-beta-D-ribosyl)imidazole + ADP + phosphate + H(+). It functions in the pathway purine metabolism; IMP biosynthesis via de novo pathway; 5-amino-1-(5-phospho-D-ribosyl)imidazole from N(2)-formyl-N(1)-(5-phospho-D-ribosyl)glycinamide: step 2/2. This chain is Phosphoribosylformylglycinamidine cyclo-ligase, found in Bacillus cytotoxicus (strain DSM 22905 / CIP 110041 / 391-98 / NVH 391-98).